A 544-amino-acid chain; its full sequence is Pyruvate kinase (544 aa).

Substrate is bound at residue R31. The K(+) site is built by N33 and D61. Residue 33–36 participates in ATP binding; sequence NSAH. An ATP-binding site is contributed by R68. A Mg(2+)-binding site is contributed by E204. 3 residues coordinate substrate: G227, D228, and T260. Mg(2+) is bound at residue D228.

The protein belongs to the pyruvate kinase family. In terms of assembly, homotetramer. Mg(2+) serves as cofactor. K(+) is required as a cofactor.

It catalyses the reaction pyruvate + ATP = phosphoenolpyruvate + ADP + H(+). Its pathway is carbohydrate degradation; glycolysis; pyruvate from D-glyceraldehyde 3-phosphate: step 5/5. The protein is Pyruvate kinase of Thermoplasma acidophilum (strain ATCC 25905 / DSM 1728 / JCM 9062 / NBRC 15155 / AMRC-C165).